A 27-amino-acid polypeptide reads, in one-letter code: Pregnancy-associated glycoprotein 55 (27 aa).

The protein belongs to the peptidase A1 family. Post-translationally, glycosylated. As to expression, placenta.

The sequence is that of Pregnancy-associated glycoprotein 55 (PAG55) from Capra hircus (Goat).